Reading from the N-terminus, the 335-residue chain is Holliday junction branch migration complex subunit RuvB (335 aa).

The segment at Met1 to Tyr181 is large ATPase domain (RuvB-L). ATP contacts are provided by residues Leu20, Arg21, Gly62, Lys65, Thr66, Thr67, Glu128–Tyr130, Arg171, Tyr181, and Arg218. Thr66 lines the Mg(2+) pocket. Residues Lys182–Gly252 form a small ATPAse domain (RuvB-S) region. A head domain (RuvB-H) region spans residues Glu255–Glu335. Residues Arg309 and Arg314 each coordinate DNA.

It belongs to the RuvB family. In terms of assembly, homohexamer. Forms an RuvA(8)-RuvB(12)-Holliday junction (HJ) complex. HJ DNA is sandwiched between 2 RuvA tetramers; dsDNA enters through RuvA and exits via RuvB. An RuvB hexamer assembles on each DNA strand where it exits the tetramer. Each RuvB hexamer is contacted by two RuvA subunits (via domain III) on 2 adjacent RuvB subunits; this complex drives branch migration. In the full resolvosome a probable DNA-RuvA(4)-RuvB(12)-RuvC(2) complex forms which resolves the HJ.

It localises to the cytoplasm. The catalysed reaction is ATP + H2O = ADP + phosphate + H(+). The RuvA-RuvB-RuvC complex processes Holliday junction (HJ) DNA during genetic recombination and DNA repair, while the RuvA-RuvB complex plays an important role in the rescue of blocked DNA replication forks via replication fork reversal (RFR). RuvA specifically binds to HJ cruciform DNA, conferring on it an open structure. The RuvB hexamer acts as an ATP-dependent pump, pulling dsDNA into and through the RuvAB complex. RuvB forms 2 homohexamers on either side of HJ DNA bound by 1 or 2 RuvA tetramers; 4 subunits per hexamer contact DNA at a time. Coordinated motions by a converter formed by DNA-disengaged RuvB subunits stimulates ATP hydrolysis and nucleotide exchange. Immobilization of the converter enables RuvB to convert the ATP-contained energy into a lever motion, pulling 2 nucleotides of DNA out of the RuvA tetramer per ATP hydrolyzed, thus driving DNA branch migration. The RuvB motors rotate together with the DNA substrate, which together with the progressing nucleotide cycle form the mechanistic basis for DNA recombination by continuous HJ branch migration. Branch migration allows RuvC to scan DNA until it finds its consensus sequence, where it cleaves and resolves cruciform DNA. In Campylobacter jejuni (strain RM1221), this protein is Holliday junction branch migration complex subunit RuvB.